The following is a 406-amino-acid chain: Acetate kinase (406 aa).

Asn-7 serves as a coordination point for Mg(2+). ATP is bound at residue Lys-14. Arg-90 is a binding site for substrate. The Proton donor/acceptor role is filled by Asp-147. ATP contacts are provided by residues 207–211 (HLGNG), 283–285 (DMR), and 331–335 (GVGEN). Residue Glu-385 participates in Mg(2+) binding.

It belongs to the acetokinase family. As to quaternary structure, homodimer. The cofactor is Mg(2+). Requires Mn(2+) as cofactor.

The protein localises to the cytoplasm. It catalyses the reaction acetate + ATP = acetyl phosphate + ADP. The protein operates within metabolic intermediate biosynthesis; acetyl-CoA biosynthesis; acetyl-CoA from acetate: step 1/2. Its function is as follows. Catalyzes the formation of acetyl phosphate from acetate and ATP. Can also catalyze the reverse reaction. This chain is Acetate kinase, found in Thermosipho africanus (strain TCF52B).